A 146-amino-acid polypeptide reads, in one-letter code: Prolactin-inducible protein homolog (146 aa).

The N-terminal stretch at 1–28 (MLTFQFLFRASPATLLLTLYLQLGVITA) is a signal peptide. Residue Gln-29 is modified to Pyrrolidone carboxylic acid. 2 cysteine pairs are disulfide-bonded: Cys-65-Cys-91 and Cys-89-Cys-123. A glycan (N-linked (GlcNAc...) asparagine) is linked at Asn-105.

It belongs to the PIP family. As to quaternary structure, monomer. Interacts with AZGP1.

Its subcellular location is the secreted. This is Prolactin-inducible protein homolog (PIP) from Cavia porcellus (Guinea pig).